Consider the following 424-residue polypeptide: Inositol phosphosphingolipids phospholipase C (424 aa).

Glutamate 49 is a Mg(2+) binding site. The active-site Proton acceptor is histidine 289. The next 2 membrane-spanning stretches (helical) occupy residues 335–357 and 364–386; these read LRIA…IAWC and VIIL…CIGL.

Belongs to the neutral sphingomyelinase family. Mg(2+) is required as a cofactor.

It is found in the cell membrane. It localises to the endoplasmic reticulum membrane. The protein operates within lipid metabolism; sphingolipid metabolism. In terms of biological role, inositol phosphosphingolipids phospholipase essential for the coordination of cell wall formation. Responsible for the hydrolysis of the phosphosphingolipids (IPS), inositol phosphorylceramide (IPC), mannosylinositol phosphorylceramide (MIPC), and mannosyldiinositol phosphorylceramide (M(IP)2C). The polypeptide is Inositol phosphosphingolipids phospholipase C (css1) (Schizosaccharomyces pombe (strain 972 / ATCC 24843) (Fission yeast)).